Here is a 93-residue protein sequence, read N- to C-terminus: MDLWKFFSKESSTSKNVAKERLKLVLVHDRANCSPDFLEMVKGDIIKVISDYMEIDEDGLDIRLTKTKREYDDASIPALVANIPIKKMKDRGR.

The protein belongs to the MinE family.

In terms of biological role, prevents the cell division inhibition by proteins MinC and MinD at internal division sites while permitting inhibition at polar sites. This ensures cell division at the proper site by restricting the formation of a division septum at the midpoint of the long axis of the cell. This is Cell division topological specificity factor from Alkaliphilus oremlandii (strain OhILAs) (Clostridium oremlandii (strain OhILAs)).